A 311-amino-acid polypeptide reads, in one-letter code: Prohibitin-2 (311 aa).

The helical transmembrane segment at 39 to 57 (GAGMGLAGLVLLGGAAFVA) threads the bilayer. The short motif at 141–144 (YRTL) is the AIM element.

Belongs to the prohibitin family. In terms of assembly, the mitochondrial prohibitin complex consists of two subunits (PHB1 and PHB2). The subunits assemble into a membrane-associated ring-shaped supercomplex of approximately 1 mDa. Interacts with ATG24/SNX4; the interaction is direct and plays a role in mitophagy.

Its subcellular location is the mitochondrion inner membrane. In terms of biological role, prohibitin probably acts as a holdase/unfoldase for the stabilization of newly synthesized mitochondrial proteins. Involved in mitophagy. Required for the switch to necrotrophic growth. The sequence is that of Prohibitin-2 from Colletotrichum higginsianum (strain IMI 349063) (Crucifer anthracnose fungus).